Here is a 303-residue protein sequence, read N- to C-terminus: Ornithine carbamoyltransferase (303 aa).

Residues 52–55 (STRT), Gln-79, Arg-103, and 130–133 (HPCQ) each bind carbamoyl phosphate. Residues Asn-161, Asp-222, and 226–227 (SM) contribute to the L-ornithine site. Residues 262–263 (CL) and Lys-290 contribute to the carbamoyl phosphate site.

The protein belongs to the aspartate/ornithine carbamoyltransferase superfamily. OTCase family.

Its subcellular location is the cytoplasm. It catalyses the reaction carbamoyl phosphate + L-ornithine = L-citrulline + phosphate + H(+). Its pathway is amino-acid biosynthesis; L-arginine biosynthesis; L-arginine from L-ornithine and carbamoyl phosphate: step 1/3. In terms of biological role, reversibly catalyzes the transfer of the carbamoyl group from carbamoyl phosphate (CP) to the N(epsilon) atom of ornithine (ORN) to produce L-citrulline. In Desulfotalea psychrophila (strain LSv54 / DSM 12343), this protein is Ornithine carbamoyltransferase.